The chain runs to 126 residues: Holo-[acyl-carrier-protein] synthase (126 aa).

Mg(2+) contacts are provided by Asp9 and Glu58.

This sequence belongs to the P-Pant transferase superfamily. AcpS family. Mg(2+) is required as a cofactor.

The protein localises to the cytoplasm. The enzyme catalyses apo-[ACP] + CoA = holo-[ACP] + adenosine 3',5'-bisphosphate + H(+). Its function is as follows. Transfers the 4'-phosphopantetheine moiety from coenzyme A to a Ser of acyl-carrier-protein. The sequence is that of Holo-[acyl-carrier-protein] synthase from Escherichia coli O139:H28 (strain E24377A / ETEC).